The primary structure comprises 503 residues: GMP synthase [glutamine-hydrolyzing] (503 aa).

Residues 3-189 (PVLVVDFGSQ…AFLSSFAAPN (187 aa)) form the Glutamine amidotransferase type-1 domain. C80 serves as the catalytic Nucleophile. Active-site residues include H165 and E167. Positions 190 to 380 (WDPEQTICGT…LGIPKHIVHR (191 aa)) constitute a GMPS ATP-PPase domain. 217–223 (SGGVDSV) contacts ATP.

Homodimer.

It catalyses the reaction XMP + L-glutamine + ATP + H2O = GMP + L-glutamate + AMP + diphosphate + 2 H(+). The protein operates within purine metabolism; GMP biosynthesis; GMP from XMP (L-Gln route): step 1/1. Catalyzes the synthesis of GMP from XMP. This chain is GMP synthase [glutamine-hydrolyzing], found in Tropheryma whipplei (strain TW08/27) (Whipple's bacillus).